The sequence spans 307 residues: Olfactory receptor 12D2 (307 aa).

Topologically, residues 1–23 (MLNTTSVTEFLLLGVTDIQELQP) are extracellular. Asn3 carries N-linked (GlcNAc...) asparagine glycosylation. Residues 24 to 44 (FLFVVFLTIYFISVTGNGAVL) traverse the membrane as a helical segment. The Cytoplasmic segment spans residues 45-52 (MIVISDPR). The helical transmembrane segment at 53–73 (LHSLMYFFLGNLSYLDICYST) threads the bilayer. The Extracellular portion of the chain corresponds to 74 to 97 (VTLPKMLQNFLSTHKAISFLGCIS). Cys95 and Cys187 are oxidised to a cystine. The helical transmembrane segment at 98–118 (QLHFFHSLGSTESMLFAVMAF) threads the bilayer. Over 119–137 (DLSVAICKPLRYTVIMNPQ) the chain is Cytoplasmic. Residues 138–158 (LCTQMAITIWVIGFFHALLHS) traverse the membrane as a helical segment. At 159-195 (VMTSRLNFCGSNRIHHFLCDIKPLLKLACGNTELNQW) the chain is on the extracellular side. A helical transmembrane segment spans residues 196-215 (LLSTVTGTIAMGPFFLTLLS). Residues 216–236 (YFYIITYLFFKTRSCSMLCKA) lie on the Cytoplasmic side of the membrane. Residues 237-257 (LSTCASHFMVVILFYAPVLFT) form a helical membrane-spanning segment. At 258-270 (YIHPALESFMDQD) the chain is on the extracellular side. The helical transmembrane segment at 271-291 (RIVAIMYTVVTPVLNPLIYTL) threads the bilayer. Topologically, residues 292–307 (RNKEVKGALGRVIRRL) are cytoplasmic.

The protein belongs to the G-protein coupled receptor 1 family.

The protein resides in the cell membrane. In terms of biological role, odorant receptor. The sequence is that of Olfactory receptor 12D2 (OR12D2) from Homo sapiens (Human).